Consider the following 441-residue polypeptide: Probable acetylornithine aminotransferase, mitochondrial (441 aa).

K294 bears the N6-(pyridoxal phosphate)lysine mark.

It belongs to the class-III pyridoxal-phosphate-dependent aminotransferase family. The cofactor is pyridoxal 5'-phosphate.

It is found in the mitochondrion matrix. It catalyses the reaction N(2)-acetyl-L-ornithine + 2-oxoglutarate = N-acetyl-L-glutamate 5-semialdehyde + L-glutamate. Its pathway is amino-acid biosynthesis; L-arginine biosynthesis; N(2)-acetyl-L-ornithine from L-glutamate: step 4/4. This is Probable acetylornithine aminotransferase, mitochondrial (arg1) from Schizosaccharomyces pombe (strain 972 / ATCC 24843) (Fission yeast).